A 950-amino-acid polypeptide reads, in one-letter code: Protein translocase subunit SecA (950 aa).

ATP is bound by residues glutamine 87, 105 to 109 (GEGKT), and aspartate 524. The segment at 908–932 (GAAPVPAEARNPNDPSTWGKVGRNE) is disordered. Zn(2+) contacts are provided by cysteine 934, cysteine 936, cysteine 945, and histidine 946.

The protein belongs to the SecA family. Monomer and homodimer. Part of the essential Sec protein translocation apparatus which comprises SecA, SecYEG and auxiliary proteins SecDF-YajC and YidC. Requires Zn(2+) as cofactor.

The protein resides in the cell inner membrane. The protein localises to the cytoplasm. It catalyses the reaction ATP + H2O + cellular proteinSide 1 = ADP + phosphate + cellular proteinSide 2.. Its function is as follows. Part of the Sec protein translocase complex. Interacts with the SecYEG preprotein conducting channel. Has a central role in coupling the hydrolysis of ATP to the transfer of proteins into and across the cell membrane, serving both as a receptor for the preprotein-SecB complex and as an ATP-driven molecular motor driving the stepwise translocation of polypeptide chains across the membrane. The polypeptide is Protein translocase subunit SecA (Bradyrhizobium sp. (strain BTAi1 / ATCC BAA-1182)).